We begin with the raw amino-acid sequence, 142 residues long: Centromere protein S (142 aa).

A disordered region spans residues 107–142 (LKGKAKKKRKPEDESRSSRESMAEELDGAEELQSES). Residues 116-128 (KPEDESRSSRESM) show a composition bias toward basic and acidic residues. The segment covering 129–142 (AEELDGAEELQSES) has biased composition (acidic residues).

Belongs to the TAF9 family. CENP-S/MHF1 subfamily. As to quaternary structure, heterodimer with CENPX, sometimes called MHF; this interaction stabilizes both partners. MHF heterodimers can assemble to form tetrameric structures. MHF also coassemble with CENPT-CENPW heterodimers at centromeres to form the tetrameric CENP-T-W-S-X complex. Forms a discrete complex with FANCM and CENPX, called FANCM-MHF; this interaction, probably mediated by direct binding between CENPS and FANCM, leads to synergistic activation of double-stranded DNA binding and strongly stimulates FANCM-mediated DNA remodeling. Recruited by FANCM to the Fanconi anemia (FA) core complex, which consists of CENPS, CENPX, FANCA, FANCB, FANCC, FANCE, FANCF, FANCG, FANCL, FANCM, FAAP24 and FAAP100. The FA core complex associates with Bloom syndrome (BLM) complex, which consists of at least BLM, DNA topoisomerase 3-alpha (TOP3A), RMI1/BLAP75, RPA1/RPA70 and RPA2/RPA32. The super complex between FA and BLM is called BRAFT. Component of the CENPA-CAD complex, composed of CENPI, CENPK, CENPL, CENPO, CENPP, CENPQ, CENPR and CENPS. The CENPA-CAD complex is probably recruited on centromeres by the CENPA-NAC complex, at least composed of CENPA, CENPC, CENPH, CENPM, CENPN, CENPT and CENPU.

It localises to the nucleus. Its subcellular location is the chromosome. The protein localises to the centromere. The protein resides in the kinetochore. In terms of biological role, DNA-binding component of the Fanconi anemia (FA) core complex. Required for the normal activation of the FA pathway, leading to monoubiquitination of the FANCI-FANCD2 complex in response to DNA damage, cellular resistance to DNA cross-linking drugs, and prevention of chromosomal breakage. In complex with CENPX (MHF heterodimer), crucial cofactor for FANCM in both binding and ATP-dependent remodeling of DNA. Stabilizes FANCM. In complex with CENPX and FANCM (but not other FANC proteins), rapidly recruited to blocked forks and promotes gene conversion at blocked replication forks. In complex with CENPT, CENPW and CENPX (CENP-T-W-S-X heterotetramer), involved in the formation of a functional kinetochore outer plate, which is essential for kinetochore-microtubule attachment and faithful mitotic progression. As a component of MHF and CENP-T-W-S-X complexes, binds DNA and bends it to form a nucleosome-like structure. DNA-binding function is fulfilled in the presence of CENPX, with the following preference for DNA substates: Holliday junction &gt; double-stranded &gt; splay arm &gt; single-stranded. Does not bind DNA on its own. The polypeptide is Centromere protein S (Cenps) (Mus musculus (Mouse)).